Here is a 315-residue protein sequence, read N- to C-terminus: Zinc finger transcription factor ref-2 (315 aa).

The C2H2-type 1; atypical zinc finger occupies Val83–His112. Residues Lys124–His146 form a C2H2-type 2; degenerate zinc finger. 3 consecutive C2H2-type zinc fingers follow at residues Phe152–His174, Phe180–His204, and Tyr210–His234. A disordered region spans residues Ser225 to Pro270. The segment covering Val233 to Ser249 has biased composition (basic and acidic residues). A compositionally biased stretch (polar residues) spans Asp251–Pro270.

Interacts with TCF transcription factor pop-1; the interaction is direct and facilitates transcriptional activation; transcription may be repressed by beta-catenin/sys-1.

The protein resides in the nucleus. It is found in the cytoplasm. In terms of biological role, transcription factor. Modulates expression of target genes by binding to regulatory elements. Required for normal cell division timing and cell positioning in anterior lineages, acting in a cell-autonomous manner. Required for development, fusion and fate of cells of the ventral epidermis, the Pn.p cells, during larval development; acts in concert with homeobox genes lin-39 and mab-5. Required for the specification of the AIY interneuron. In complex with TCF transcription factor pop-1, positively modulates expression of LIM/homeobox protein ttx-3 in anterior daughter cells of the SMDD/AIY neuron lineage. This is Zinc finger transcription factor ref-2 from Caenorhabditis elegans.